The following is a 349-amino-acid chain: sn-glycerol-3-phosphate import ATP-binding protein UgpC (349 aa).

The ABC transporter domain occupies 4 to 234 (ISLRDVRKSY…PATTFVAGFI (231 aa)). An ATP-binding site is contributed by 36–43 (GPSGCGKS).

The protein belongs to the ABC transporter superfamily. sn-glycerol-3-phosphate importer (TC 3.A.1.1.3) family. The complex is composed of two ATP-binding proteins (UgpC), two transmembrane proteins (UgpA and UgpE) and a solute-binding protein (UgpB).

The protein resides in the cell inner membrane. It catalyses the reaction sn-glycerol 3-phosphate(out) + ATP + H2O = sn-glycerol 3-phosphate(in) + ADP + phosphate + H(+). Functionally, part of the ABC transporter complex UgpBAEC involved in sn-glycerol-3-phosphate (G3P) import. Responsible for energy coupling to the transport system. This Cereibacter sphaeroides (strain ATCC 17023 / DSM 158 / JCM 6121 / CCUG 31486 / LMG 2827 / NBRC 12203 / NCIMB 8253 / ATH 2.4.1.) (Rhodobacter sphaeroides) protein is sn-glycerol-3-phosphate import ATP-binding protein UgpC.